Consider the following 263-residue polypeptide: Hemophilin (263 aa).

An N-terminal signal peptide occupies residues 1 to 20; the sequence is MKISQLFLGLVACSTAFAYA. Heme b-binding residues include His-42, Tyr-58, Ser-104, and His-105.

As to quaternary structure, monomer in solution. Interacts with host hemoglobin.

The protein localises to the secreted. In terms of biological role, part of a high affinity heme acquisition system. Functions as a hemophore that acquires heme from human hemoglobin and delivers the heme to its cognate receptor, HphR, facilitating transport of heme across the bacterial outer membrane. Apo HphA interacts specifically with human hemoglobin and steals heme through a passive process probably due to its high affinity for heme. It can also acquire heme complexed to human serum albumin. Plays a supporting role for full virulence, acting as an accessory factor that enhances the process of heme uptake. The polypeptide is Hemophilin (Acinetobacter baumannii).